We begin with the raw amino-acid sequence, 197 residues long: Guanylate kinase (197 aa).

A disordered region spans residues 1–30 (MAATPRGTSPVPPDARPRLTVLSGPSGVGK). The region spanning 17 to 197 (PRLTVLSGPS…RELLALTNVV (181 aa)) is the Guanylate kinase-like domain. 24 to 31 (GPSGVGKS) provides a ligand contact to ATP.

The protein belongs to the guanylate kinase family.

The protein localises to the cytoplasm. It catalyses the reaction GMP + ATP = GDP + ADP. Its function is as follows. Essential for recycling GMP and indirectly, cGMP. The polypeptide is Guanylate kinase (gmk) (Streptomyces coelicolor (strain ATCC BAA-471 / A3(2) / M145)).